Consider the following 462-residue polypeptide: Glycine--tRNA ligase (462 aa).

Substrate contacts are provided by Arg100 and Glu170. ATP-binding positions include 202-204 (RNE), 212-217 (FRTREF), 287-288 (EL), and 331-334 (GVER). Residue 217–221 (FEQME) coordinates substrate. Residue 327–331 (EPSVG) coordinates substrate.

Belongs to the class-II aminoacyl-tRNA synthetase family. In terms of assembly, homodimer.

It is found in the cytoplasm. It carries out the reaction tRNA(Gly) + glycine + ATP = glycyl-tRNA(Gly) + AMP + diphosphate. Functionally, catalyzes the attachment of glycine to tRNA(Gly). The sequence is that of Glycine--tRNA ligase from Malacoplasma penetrans (strain HF-2) (Mycoplasma penetrans).